A 152-amino-acid chain; its full sequence is Large ribosomal subunit protein bL17 (152 aa).

Positions 121 to 140 (APSASQKTGKQDRAKRVKGS) are disordered.

It belongs to the bacterial ribosomal protein bL17 family. Part of the 50S ribosomal subunit. Contacts protein L32.

This chain is Large ribosomal subunit protein bL17, found in Pelodictyon phaeoclathratiforme (strain DSM 5477 / BU-1).